A 397-amino-acid polypeptide reads, in one-letter code: Ribosomal RNA large subunit methyltransferase I (397 aa).

Residues 2-79 form the PUA domain; the sequence is TAAIYLVKGR…KEEINKAFFV (78 aa).

It belongs to the methyltransferase superfamily. RlmI family.

It localises to the cytoplasm. It carries out the reaction cytidine(1962) in 23S rRNA + S-adenosyl-L-methionine = 5-methylcytidine(1962) in 23S rRNA + S-adenosyl-L-homocysteine + H(+). Its function is as follows. Specifically methylates the cytosine at position 1962 (m5C1962) of 23S rRNA. The protein is Ribosomal RNA large subunit methyltransferase I of Vibrio parahaemolyticus serotype O3:K6 (strain RIMD 2210633).